A 100-amino-acid chain; its full sequence is Large ribosomal subunit protein eL36B (100 aa).

This sequence belongs to the eukaryotic ribosomal protein eL36 family. Component of the large ribosomal subunit (LSU). Mature yeast ribosomes consist of a small (40S) and a large (60S) subunit. The 40S small subunit contains 1 molecule of ribosomal RNA (18S rRNA) and 33 different proteins (encoded by 57 genes). The large 60S subunit contains 3 rRNA molecules (25S, 5.8S and 5S rRNA) and 46 different proteins (encoded by 81 genes).

It localises to the cytoplasm. Functionally, component of the ribosome, a large ribonucleoprotein complex responsible for the synthesis of proteins in the cell. The small ribosomal subunit (SSU) binds messenger RNAs (mRNAs) and translates the encoded message by selecting cognate aminoacyl-transfer RNA (tRNA) molecules. The large subunit (LSU) contains the ribosomal catalytic site termed the peptidyl transferase center (PTC), which catalyzes the formation of peptide bonds, thereby polymerizing the amino acids delivered by tRNAs into a polypeptide chain. The nascent polypeptides leave the ribosome through a tunnel in the LSU and interact with protein factors that function in enzymatic processing, targeting, and the membrane insertion of nascent chains at the exit of the ribosomal tunnel. This chain is Large ribosomal subunit protein eL36B, found in Saccharomyces cerevisiae (strain ATCC 204508 / S288c) (Baker's yeast).